The primary structure comprises 451 residues: Mannan endo-1,6-alpha-mannosidase DFG5 (451 aa).

Positions 1-21 (MVSLQQLTISILLLFTASVQS) are cleaved as a signal peptide. N-linked (GlcNAc...) asparagine glycans are attached at residues Asn86, Asn111, Asn135, Asn203, Asn243, Asn268, and Asn402. Ala429 carries the GPI-anchor amidated alanine lipid modification. The propeptide at 430-451 (GAGVLTAIVLAVILGGAIWMIF) is removed in mature form.

It belongs to the glycosyl hydrolase 76 family. In terms of processing, the GPI-anchor is attached to the protein in the endoplasmic reticulum and serves to target the protein to the cell surface. There, the glucosamine-inositol phospholipid moiety is cleaved off and the GPI-modified mannoprotein is covalently attached via its lipidless GPI glycan remnant to the 1,6-beta-glucan of the outer cell wall layer. N-mannosylated.

It localises to the secreted. The protein localises to the cell wall. Its subcellular location is the cell membrane. It catalyses the reaction Random hydrolysis of (1-&gt;6)-alpha-D-mannosidic linkages in unbranched (1-&gt;6)-mannans.. In terms of biological role, required for normal synthesis of the cell wall and alkaline pH-induced hypha formation. This is Mannan endo-1,6-alpha-mannosidase DFG5 (DFG5) from Candida albicans (strain SC5314 / ATCC MYA-2876) (Yeast).